A 277-amino-acid chain; its full sequence is Release factor glutamine methyltransferase (277 aa).

S-adenosyl-L-methionine contacts are provided by residues 119–123, Asp142, Trp170, and Asn184; that span reads GTGCG. Substrate is bound at residue 184-187; it reads NPPY.

It belongs to the protein N5-glutamine methyltransferase family. PrmC subfamily.

It carries out the reaction L-glutaminyl-[peptide chain release factor] + S-adenosyl-L-methionine = N(5)-methyl-L-glutaminyl-[peptide chain release factor] + S-adenosyl-L-homocysteine + H(+). In terms of biological role, methylates the class 1 translation termination release factors RF1/PrfA and RF2/PrfB on the glutamine residue of the universally conserved GGQ motif. This Buchnera aphidicola subsp. Baizongia pistaciae (strain Bp) protein is Release factor glutamine methyltransferase.